The primary structure comprises 446 residues: MGKHYLPNSAHKDEMLKKIGFNSIEDLFSDVPKGMVKEFNLPEGRSEYEVFLELNEVLSKNKTVLEMPSFLGAGTYFHYIPAHVKYLIERSEFLTAYTPYQPEISQGMLQALFEYQSLIAELVGLPIVNSSMYDWGTAMAEAALMSARVTRKNKFVVPEHMSPEKKKVLHTYTAGPGLEIEYVNWNERGQLDLEELKEKVEGAAGVYVEMPNFFGILEEEIRAIGEIAHDAGALFVVGVDPTILGIVEAPGELGADIVVGEAAYFGNPMNFGGPRAGIFAVRDDKKLIRQMPGRIIGMTKDADGKRAFVMTLQTREQHIRRAKATSNICSNEALVAVAAAIHLASLGPRGLRELGEVILKNTAYLKKRLSEVAEIPFEGVNFKDVLVRFEKSYEEIHEVLLERNIHGGFYLKPHFPELGESALFAATETTRKEWVDALIEALREVA.

Belongs to the GcvP family. N-terminal subunit subfamily. The glycine cleavage system is composed of four proteins: P, T, L and H. In this organism, the P 'protein' is a heterodimer of two subunits.

It catalyses the reaction N(6)-[(R)-lipoyl]-L-lysyl-[glycine-cleavage complex H protein] + glycine + H(+) = N(6)-[(R)-S(8)-aminomethyldihydrolipoyl]-L-lysyl-[glycine-cleavage complex H protein] + CO2. Its function is as follows. The glycine cleavage system catalyzes the degradation of glycine. The P protein binds the alpha-amino group of glycine through its pyridoxal phosphate cofactor; CO(2) is released and the remaining methylamine moiety is then transferred to the lipoamide cofactor of the H protein. In Thermococcus onnurineus (strain NA1), this protein is Probable glycine dehydrogenase (decarboxylating) subunit 1.